A 906-amino-acid polypeptide reads, in one-letter code: Gamma-tubulin complex component 3 homolog (906 aa).

A compositionally biased stretch (polar residues) spans 208-229 (GQQPSQQSTTTKGLPNTVSRNV). Positions 208–242 (GQQPSQQSTTTKGLPNTVSRNVPRTRREGDSSGSV) are disordered.

It belongs to the TUBGCP family. In terms of assembly, interacts with gamma-tubulin.

It localises to the cytoplasm. It is found in the cytoskeleton. Its subcellular location is the microtubule organizing center. The protein resides in the centrosome. Necessary for the recruitment of gamma-tubulin to the centrosome and for the formation of a functional centrosome. In Xenopus laevis (African clawed frog), this protein is Gamma-tubulin complex component 3 homolog (tubgcp3).